The sequence spans 492 residues: Catalase-1 (492 aa).

Catalysis depends on residues H65 and N138. Y348 contacts heme.

The protein belongs to the catalase family. In terms of assembly, homotetramer. It depends on heme as a cofactor.

The protein resides in the peroxisome. Its subcellular location is the glyoxysome. It carries out the reaction 2 H2O2 = O2 + 2 H2O. In terms of biological role, occurs in almost all aerobically respiring organisms and serves to protect cells from the toxic effects of hydrogen peroxide. The sequence is that of Catalase-1 (CAT1) from Triticum aestivum (Wheat).